The sequence spans 206 residues: Outer-membrane lipoprotein carrier protein (206 aa).

A signal peptide spans 1–21; it reads MKKLLCAVLLSPLLYSNAVLA.

Belongs to the LolA family. Monomer.

It localises to the periplasm. Participates in the translocation of lipoproteins from the inner membrane to the outer membrane. Only forms a complex with a lipoprotein if the residue after the N-terminal Cys is not an aspartate (The Asp acts as a targeting signal to indicate that the lipoprotein should stay in the inner membrane). This chain is Outer-membrane lipoprotein carrier protein, found in Shewanella oneidensis (strain ATCC 700550 / JCM 31522 / CIP 106686 / LMG 19005 / NCIMB 14063 / MR-1).